We begin with the raw amino-acid sequence, 487 residues long: Betaine aldehyde dehydrogenase (487 aa).

K(+) contacts are provided by S26 and D93. An NAD(+)-binding site is contributed by 150–152 (GAW). The active-site Charge relay system is the K162. Residues 176-179 (KPSE) and 229-232 (SVPT) each bind NAD(+). L244 is a K(+) binding site. E250 acts as the Proton acceptor in catalysis. Residues G252, C284, and E384 each contribute to the NAD(+) site. C284 functions as the Nucleophile in the catalytic mechanism. At C284 the chain carries Cysteine sulfenic acid (-SOH). K(+)-binding residues include K454 and G457. Catalysis depends on E461, which acts as the Charge relay system.

Belongs to the aldehyde dehydrogenase family. In terms of assembly, dimer of dimers. It depends on K(+) as a cofactor.

It catalyses the reaction betaine aldehyde + NAD(+) + H2O = glycine betaine + NADH + 2 H(+). It functions in the pathway amine and polyamine biosynthesis; betaine biosynthesis via choline pathway; betaine from betaine aldehyde: step 1/1. Involved in the biosynthesis of the osmoprotectant glycine betaine. Catalyzes the irreversible oxidation of betaine aldehyde to the corresponding acid. This is Betaine aldehyde dehydrogenase from Rhizobium johnstonii (strain DSM 114642 / LMG 32736 / 3841) (Rhizobium leguminosarum bv. viciae).